Consider the following 410-residue polypeptide: Peptidase T (410 aa).

His78 contacts Zn(2+). Residue Asp80 is part of the active site. Residue Asp140 coordinates Zn(2+). Glu173 acts as the Proton acceptor in catalysis. 3 residues coordinate Zn(2+): Glu174, Asp196, and His379.

The protein belongs to the peptidase M20B family. The cofactor is Zn(2+).

Its subcellular location is the cytoplasm. It catalyses the reaction Release of the N-terminal residue from a tripeptide.. Functionally, cleaves the N-terminal amino acid of tripeptides. This is Peptidase T from Pectobacterium carotovorum subsp. carotovorum (strain PC1).